We begin with the raw amino-acid sequence, 424 residues long: Histidine--tRNA ligase (424 aa).

The disordered stretch occupies residues 1–22; that stretch reads MSYRRPKGTYDVYPGDAARQEP.

This sequence belongs to the class-II aminoacyl-tRNA synthetase family. Homodimer.

The protein resides in the cytoplasm. It carries out the reaction tRNA(His) + L-histidine + ATP = L-histidyl-tRNA(His) + AMP + diphosphate + H(+). The sequence is that of Histidine--tRNA ligase from Rubrobacter xylanophilus (strain DSM 9941 / JCM 11954 / NBRC 16129 / PRD-1).